Here is a 2288-residue protein sequence, read N- to C-terminus: Protein Ycf2 (2288 aa).

1629-1636 serves as a coordination point for ATP; it reads GSIGTGRS.

It belongs to the Ycf2 family.

It is found in the plastid. The protein localises to the chloroplast stroma. In terms of biological role, probable ATPase of unknown function. Its presence in a non-photosynthetic plant (Epifagus virginiana) and experiments in tobacco indicate that it has an essential function which is probably not related to photosynthesis. In Phaseolus vulgaris (Kidney bean), this protein is Protein Ycf2.